Here is an 888-residue protein sequence, read N- to C-terminus: Semaphorin-6B (888 aa).

The signal sequence occupies residues 1 to 25 (MQTPRASPPRPALLLLLLLLGGAHG). At 26 to 603 (LFPEEPPPLS…VSVNLLVTSS (578 aa)) the chain is on the extracellular side. One can recognise a Sema domain in the interval 31–523 (PPPLSVAPRD…FPRCVVRVPV (493 aa)). N-linked (GlcNAc...) asparagine glycosylation occurs at N74. Intrachain disulfides connect C116-C126 and C144-C153. 3 N-linked (GlcNAc...) asparagine glycosylation sites follow: N155, N167, and N291. Cystine bridges form between C267–C378 and C292–C337. N386, N441, and N462 each carry an N-linked (GlcNAc...) asparagine glycan. Intrachain disulfides connect C486-C517, C526-C544, C532-C578, and C536-C552. Residues 604–624 (VAAFVVGAVVSGFSVGWFVGL) form a helical membrane-spanning segment. Topologically, residues 625–888 (RERRELARRK…GADRTAPPVP (264 aa)) are cytoplasmic. Disordered regions lie at residues 651 to 679 (VSRLGERRAQGPGGRGGGGGGGAGVPPEA), 695 to 742 (LQGG…HPLL), and 757 to 888 (RAPE…PPVP). A compositionally biased stretch (gly residues) spans 661 to 674 (GPGGRGGGGGGGAG). Residue R665 is modified to Omega-N-methylarginine. Residues 706-717 (LLPTPEQTPLPQ) are compositionally biased toward low complexity.

The protein belongs to the semaphorin family. In terms of assembly, (Microbial infection) Interacts with P.sordellii toxin TcsL; semaphorins SEMA6A and SEMA6B constitute the major host receptors for TcsL in the vascular endothelium. As to expression, expressed in the brain in GABAergic neurons.

It is found in the cell membrane. Functions as a cell surface repellent for mossy fibers of developing neurons in the hippocampus where it plays a role in axon guidance. May function through the PLXNA4 receptor expressed by mossy cell axons. In terms of biological role, (Microbial infection) Acts as a receptor for P.sordellii toxin TcsL in the in the vascular endothelium. This chain is Semaphorin-6B (SEMA6B), found in Homo sapiens (Human).